The primary structure comprises 456 residues: MQGYIQESDFNLVEEGFLARDLMEEIINEVSQTEDRDAFFVADLGDVVRKHLRFLKALPRVKPFYAVKCNSSKGVVKILAELGAGFDCASKTEIELVQDVGVAPERIIYANPCKQISQIKYAAKNGVQMMTFDNEVELSKVSRSHPNARMVLRIATDDSKSSARLSVKFGAPLKSCRRLLEMAKNLSVDVIGVSFHVGSGCTDSKAYTQAISDARLVFEMASEFGYKMWLLDIGGGFPGTEDSKIRFEEIAGVINPALDMYFPESSDVQIIAEPGRYYVASAFSLAVNVIAKKEVEHSVSDDEENESSKSIMYYVNDGVYGSFNCLVFDHAHPKPILHKKPSPDQPLYTSSLWGPTCDGLDQIAERVQLPELHVGDWLLFENMGAYTIAASSNFNGFQQSPVHYAMPRAAWKAVQLLQRGLQQTEEKENVCTPMSCGWEISDSLCFTRTFAATSII.

The active-site Proton donor; shared with dimeric partner is the Cys357.

It belongs to the Orn/Lys/Arg decarboxylase class-II family. ODC antizyme inhibitor subfamily. In terms of assembly, monomer. Interacts with OAZ1; this interaction disrupts the interaction between the antizyme and ODC1. Does not form a heterodimer with ODC1.

The protein localises to the nucleus. The protein resides in the cytoplasm. Its subcellular location is the perinuclear region. It is found in the membrane. It localises to the cytoplasmic vesicle. The protein localises to the endoplasmic reticulum-Golgi intermediate compartment. The protein resides in the golgi apparatus. Its subcellular location is the cis-Golgi network. It is found in the trans-Golgi network. It localises to the cytoplasmic granule. The protein localises to the cell projection. The protein resides in the axon. Its subcellular location is the dendrite. It is found in the perikaryon. Antizyme inhibitor (AZI) protein that positively regulates ornithine decarboxylase (ODC) activity and polyamine uptake. AZI is an enzymatically inactive ODC homolog that counteracts the negative effect of ODC antizyme (AZ) on ODC activity by competing with ODC for antizyme-binding. Inhibits antizyme-dependent ODC degradation and releases ODC monomers from their inactive complex with antizymes, leading to formation of the catalytically active ODC homodimer and restoring polyamine production. Participates in the morphological integrity of the trans-Golgi network (TGN) and functions as a regulator of intracellular secretory vesicle trafficking. The polypeptide is Antizyme inhibitor 2 (azin2) (Xenopus laevis (African clawed frog)).